A 272-amino-acid polypeptide reads, in one-letter code: Diaminopimelate epimerase (272 aa).

Substrate-binding residues include N11 and N63. The active-site Proton donor is the C72. Substrate is bound by residues 73–74, N190, and 208–209; these read GN and ER. Residue C217 is the Proton acceptor of the active site. 218–219 contributes to the substrate binding site; it reads GT.

This sequence belongs to the diaminopimelate epimerase family. Homodimer.

The protein localises to the cytoplasm. The enzyme catalyses (2S,6S)-2,6-diaminopimelate = meso-2,6-diaminopimelate. Its pathway is amino-acid biosynthesis; L-lysine biosynthesis via DAP pathway; DL-2,6-diaminopimelate from LL-2,6-diaminopimelate: step 1/1. Functionally, catalyzes the stereoinversion of LL-2,6-diaminopimelate (L,L-DAP) to meso-diaminopimelate (meso-DAP), a precursor of L-lysine and an essential component of the bacterial peptidoglycan. The chain is Diaminopimelate epimerase from Clostridium perfringens (strain 13 / Type A).